Consider the following 345-residue polypeptide: Lysine-specific demethylase JMJ32 (345 aa).

Residues glycine 122–glutamine 315 form the JmjC domain. Fe cation-binding residues include histidine 174, aspartate 176, and histidine 281.

The protein belongs to the JARID1 histone demethylase family. Fe(2+) serves as cofactor. Expressed ubiquitously including in vasculatures, leaves, siliques, roots and inflorescences. Present in the root meristem. Accumulates in cotyledons and root tips of young seedlings.

Its subcellular location is the nucleus. It is found in the cytoplasm. It localises to the endoplasmic reticulum. It catalyses the reaction N(6),N(6),N(6)-trimethyl-L-lysyl(27)-[histone H3] + 2-oxoglutarate + O2 = N(6),N(6)-dimethyl-L-lysyl(27)-[histone H3] + formaldehyde + succinate + CO2. The catalysed reaction is N(6),N(6)-dimethyl-L-lysyl(27)-[histone H3] + 2-oxoglutarate + O2 = N(6)-methyl-L-lysyl(27)-[histone H3] + formaldehyde + succinate + CO2. The enzyme catalyses N(6),N(6),N(6)-trimethyl-L-lysyl(27)-[histone H3] + 2 2-oxoglutarate + 2 O2 = N(6)-methyl-L-lysyl(27)-[histone H3] + 2 formaldehyde + 2 succinate + 2 CO2. In terms of biological role, histone demethylase that demethylates 'Lys-27' (H3K27me) of histone H3 with a specific activity for H3K27me3 and H3K27me2, and involved in the regulation of gene expression. No activity on H3K27me1. Together with JMJ30, regulates the flowering-repressor FLOWERING LOCUS C (FLC) locus by removing the repressive histone modification H3 lysine 27 trimethylation (H3K27me3), especially at elevated temperatures (e.g. 29 degrees Celsius), thus preventing extreme precocious flowering. JMJ30 and JMJ32 are regulators involved in the integration of abscisic acid (ABA) and brassinosteroids (BR) signaling pathways. Together with JMJ30, controls ABA-mediated growth arrest during the post-germination stage in unfavorable conditions, and responses to ABA during root development, via the removal of repressive histone mark (H3K27me3) from the SnRK2.8 promoter, thus promoting SnRK2.8 expression and subsequent kinase-dependent ABI3 activation. In addition, removes the repressive histone marks (H3K27me3) from the BZR1 locus in response to stress and ABA, thus activating the BR signaling pathway which, in turn, inhibits the ABA signaling pathway. The protein is Lysine-specific demethylase JMJ32 of Arabidopsis thaliana (Mouse-ear cress).